The following is a 181-amino-acid chain: Shikimate kinase (181 aa).

Position 23-28 (23-28) interacts with ATP; sequence GTGKST. S27 contacts Mg(2+). Substrate is bound by residues D45, R69, and G91. Residue R129 participates in ATP binding. R148 contributes to the substrate binding site.

It belongs to the shikimate kinase family. In terms of assembly, monomer. It depends on Mg(2+) as a cofactor.

It localises to the cytoplasm. The catalysed reaction is shikimate + ATP = 3-phosphoshikimate + ADP + H(+). It functions in the pathway metabolic intermediate biosynthesis; chorismate biosynthesis; chorismate from D-erythrose 4-phosphate and phosphoenolpyruvate: step 5/7. Catalyzes the specific phosphorylation of the 3-hydroxyl group of shikimic acid using ATP as a cosubstrate. The chain is Shikimate kinase from Geobacter sulfurreducens (strain ATCC 51573 / DSM 12127 / PCA).